We begin with the raw amino-acid sequence, 317 residues long: 4-diphosphocytidyl-2-C-methyl-D-erythritol kinase (317 aa).

Lys11 is an active-site residue. Residue 99 to 109 coordinates ATP; that stretch reads PVAAGLAGGST. Asp141 is a catalytic residue.

The protein belongs to the GHMP kinase family. IspE subfamily.

It carries out the reaction 4-CDP-2-C-methyl-D-erythritol + ATP = 4-CDP-2-C-methyl-D-erythritol 2-phosphate + ADP + H(+). It functions in the pathway isoprenoid biosynthesis; isopentenyl diphosphate biosynthesis via DXP pathway; isopentenyl diphosphate from 1-deoxy-D-xylulose 5-phosphate: step 3/6. Its function is as follows. Catalyzes the phosphorylation of the position 2 hydroxy group of 4-diphosphocytidyl-2C-methyl-D-erythritol. In Trichormus variabilis (strain ATCC 29413 / PCC 7937) (Anabaena variabilis), this protein is 4-diphosphocytidyl-2-C-methyl-D-erythritol kinase.